An 835-amino-acid chain; its full sequence is Translation initiation factor IF-2 (835 aa).

Positions 1–240 are disordered; it reads MSDSDGKKTL…RKQERARQKA (240 aa). Gly residues predominate over residues 50–59; sequence AGKGGAGGVA. Positions 86-152 are enriched in basic and acidic residues; it reads KAREAEEAAQ…AEAAKKRAAA (67 aa). The segment covering 153–169 has biased composition (low complexity); it reads DKAAAAAPKSDAGVAPA. The span at 184-205 shows a compositional bias: basic and acidic residues; it reads RKAEREREERGRGAKGRNDGGR. In terms of domain architecture, tr-type G spans 332–500; it reads PRPPVITIMG…AIALQAEILE (169 aa). The tract at residues 341 to 348 is G1; it reads GHVDHGKT. GTP is bound at residue 341 to 348; it reads GHVDHGKT. Residues 366–370 form a G2 region; sequence GITQH. Residues 388–391 form a G3 region; it reads DTPG. Residues 388–392 and 442–445 each bind GTP; these read DTPGH and NKID. The segment at 442 to 445 is G4; that stretch reads NKID. The interval 478–480 is G5; sequence SAH.

This sequence belongs to the TRAFAC class translation factor GTPase superfamily. Classic translation factor GTPase family. IF-2 subfamily.

It is found in the cytoplasm. Functionally, one of the essential components for the initiation of protein synthesis. Protects formylmethionyl-tRNA from spontaneous hydrolysis and promotes its binding to the 30S ribosomal subunits. Also involved in the hydrolysis of GTP during the formation of the 70S ribosomal complex. The protein is Translation initiation factor IF-2 of Ruegeria sp. (strain TM1040) (Silicibacter sp.).